Consider the following 319-residue polypeptide: MARKKITLVGAGNIGGTLAHLALIKQLGDVVLFDIAQGMPNGKALDLLQTCPIEGVDFKVRGTNDYKDLENSDVVIVTAGVPRKPGMSRDDLLGINIKVMQTVGEGIKHNCPNAFVICITNPLDIMVNMLQKFSGVPDNKIVGMAGVLDSARFRTFLADELNVSVQQVQAYVMGGHGDTMVPLTKMSNVAGVSLEQLVKEGKLKQERLDAIVSRTRSGGGEIVALLKTGSAYYAPAAAGIQMAESFLKDKKMILPCAAKVKAGMYGLDEDLFVGVPTEISANGVRPIEVEISDKEREQLQVSINAIKDLNKAAAEILAK.

NAD(+) contacts are provided by residues 10–15 (GAGNIG) and Asp-34. Residues Arg-83 and Arg-89 each coordinate substrate. NAD(+)-binding positions include Asn-96 and 119 to 121 (ITN). Substrate contacts are provided by Asn-121 and Arg-152. The active-site Proton acceptor is the His-176.

It belongs to the LDH/MDH superfamily. MDH type 3 family.

The catalysed reaction is (S)-malate + NAD(+) = oxaloacetate + NADH + H(+). Its function is as follows. Catalyzes the reversible oxidation of malate to oxaloacetate. The protein is Malate dehydrogenase of Francisella tularensis subsp. tularensis (strain FSC 198).